The chain runs to 495 residues: Anaerobic nitric oxide reductase flavorubredoxin (495 aa).

The zinc metallo-hydrolase stretch occupies residues 30–210; sequence HKGTSYNSYL…PFSPLVTAKI (181 aa). His-79, Glu-81, Asp-83, His-147, Asp-166, and His-227 together coordinate Fe cation. Residues 254 to 393 form the Flavodoxin-like domain; it reads ITLFYDSMSN…ECREHGRQLA (140 aa). FMN-binding positions include 260-264 and 342-369; these read SMSNN and AFGS…DISI. The Rubredoxin-like domain occupies 438-489; it reads DQAMLCTVCQWVYDPAQGEPDQLVAPGTPWAQVPDSFLCPGCGIGKEVFEPC. Cys-443, Cys-446, Cys-476, and Cys-479 together coordinate Fe cation.

This sequence in the N-terminal section; belongs to the zinc metallo-hydrolase group 3 family. Homotetramer. Fe cation serves as cofactor. The cofactor is FMN.

Its subcellular location is the cytoplasm. Its pathway is nitrogen metabolism; nitric oxide reduction. In terms of biological role, anaerobic nitric oxide reductase; uses NADH to detoxify nitric oxide (NO), protecting several 4Fe-4S NO-sensitive enzymes. Has at least 2 reductase partners, only one of which (NorW, flavorubredoxin reductase) has been identified. NO probably binds to the di-iron center; electrons enter from the NorW at rubredoxin and are transferred sequentially to the FMN center and the di-iron center. Also able to function as an aerobic oxygen reductase. The polypeptide is Anaerobic nitric oxide reductase flavorubredoxin (Aeromonas hydrophila subsp. hydrophila (strain ATCC 7966 / DSM 30187 / BCRC 13018 / CCUG 14551 / JCM 1027 / KCTC 2358 / NCIMB 9240 / NCTC 8049)).